We begin with the raw amino-acid sequence, 88 residues long: MIKNSFISLQEKKDESRGSVEFQVFSFTNKIRRLTSHLELHRKDYLSQRGLRKILGKRQRLLVYLSKKNRVRYKELIHKLNIRQLKTR.

This sequence belongs to the universal ribosomal protein uS15 family. As to quaternary structure, part of the 30S ribosomal subunit.

It is found in the plastid. Its subcellular location is the chloroplast. The protein is Small ribosomal subunit protein uS15c (rps15) of Aethionema cordifolium (Lebanon stonecress).